A 228-amino-acid polypeptide reads, in one-letter code: Small ribosomal subunit protein uS3 (228 aa).

One can recognise a KH type-2 domain in the interval Thr39–Arg107.

This sequence belongs to the universal ribosomal protein uS3 family. As to quaternary structure, part of the 30S ribosomal subunit. Forms a tight complex with proteins S10 and S14.

In terms of biological role, binds the lower part of the 30S subunit head. Binds mRNA in the 70S ribosome, positioning it for translation. The sequence is that of Small ribosomal subunit protein uS3 from Pseudomonas putida (strain ATCC 700007 / DSM 6899 / JCM 31910 / BCRC 17059 / LMG 24140 / F1).